The following is a 321-amino-acid chain: Carnitine monooxygenase reductase subunit (321 aa).

One can recognise an FAD-binding FR-type domain in the interval tyrosine 4–isoleucine 109. One can recognise a 2Fe-2S ferredoxin-type domain in the interval aspartate 233–leucine 321. [2Fe-2S] cluster contacts are provided by cysteine 270, cysteine 275, cysteine 278, and cysteine 308.

This sequence belongs to the PDR/VanB family. CntB subfamily. In terms of assembly, composed of an oxygenase subunit (yeaW) and a reductase subunit (yeaX). FMN is required as a cofactor. The cofactor is [2Fe-2S] cluster.

It carries out the reaction (R)-carnitine + NADH + O2 + H(+) = (3R)-3-hydroxy-4-oxobutanoate + trimethylamine + NAD(+) + H2O. The enzyme catalyses (R)-carnitine + NADPH + O2 + H(+) = (3R)-3-hydroxy-4-oxobutanoate + trimethylamine + NADP(+) + H2O. Its pathway is amine and polyamine metabolism; carnitine metabolism. Functionally, converts carnitine to trimethylamine and malic semialdehyde. Can also use gamma-butyrobetaine, choline and betaine as substrates. The chain is Carnitine monooxygenase reductase subunit (yeaX) from Escherichia coli (strain K12).